The chain runs to 85 residues: uncharacterized protein (85 aa).

Belongs to the BolA/IbaG family.

This is an uncharacterized protein from Haemophilus influenzae (strain ATCC 51907 / DSM 11121 / KW20 / Rd).